Reading from the N-terminus, the 579-residue chain is Folliculin (579 aa).

A disordered region spans residues 31-82 (QGAGSGDSPDQVEQAEEEEGGIQMSSRVRAHSPAEGASSESSSPGPKKSDMC). Phosphoserine is present on residues serine 62 and serine 73. Positions 63–76 (PAEGASSESSSPGP) are enriched in low complexity. Residues 86-242 (RSLAVGHPGY…RNGNAARSLT (157 aa)) enclose the uDENN FLCN/SMCR8-type domain. Residues 287–310 (EKLADLEEESESWDNSEAEEEEKA) are a coiled coil. Positions 294-308 (EESESWDNSEAEEEE) are enriched in acidic residues. The tract at residues 294-323 (EESESWDNSEAEEEEKAPVTPEGAEGRELT) is disordered. Residues serine 302, serine 406, serine 537, serine 542, and serine 571 each carry the phosphoserine modification. The cDENN FLCN/SMCR8-type domain occupies 339–491 (QPPKLTGFKS…ILNKIEAALT (153 aa)). The dDENN FLCN/SMCR8-type domain maps to 493 to 558 (QNLSVDVVDQ…LLKFWMTGLS (66 aa)).

The protein belongs to the folliculin family. In terms of assembly, interacts (via C-terminus) with FNIP1 or FNIP2 (via C-terminus). Component of the lysosomal folliculin complex (LFC), composed of FLCN, FNIP1 (or FNIP2), RagA/RRAGA or RagB/RRAGB GDP-bound, RagC/RRAGC or RagD/RRAGD GTP-bound, and Ragulator. Interaction with FNIP1 or FNIP2 mediates indirect interaction with the PRKAA1, PRKAB1 and PRKAG1 subunits of 5'-AMP-activated protein kinase (AMPK). Interacts with HSP90AA1 in the presence of FNIP1. Interacts with HSP70, STUB1, CDC37, AHSA1, CCT2, STIP1, PTGES3 and PPP5C. Interacts with GABARAP; interaction takes place in the presence of FNIP1 and/or FNIP2. Interacts with RILP; the interaction is direct and promotes association between RILP and RAB34. Interacts with KIF3A and KIF3B. Interacts with lactate dehydrogenase LDHA, but not LDHB; the interaction is direct, may preferentially bind LDHA dimers rather than tetramers, and regulates LDHA activity, acting as an uncompetitive inhibitor. Phosphorylation by ULK1 modulates the interaction with GABARAP and is required to regulate autophagy. As to expression, highly expressed in adult heart, pancreas, and prostate with moderate expression in adult brain, kidney, liver, adipose tissue and lung.

Its subcellular location is the lysosome membrane. The protein localises to the cytoplasm. The protein resides in the cytosol. It is found in the cell projection. It localises to the cilium. Its subcellular location is the cytoskeleton. The protein localises to the microtubule organizing center. The protein resides in the centrosome. It is found in the spindle. It localises to the nucleus. Its activity is regulated as follows. GTPase-activating activity is inhibited in the folliculin complex (LFC), which stabilizes the GDP-bound state of RagA/RRAGA (or RagB/RRAGB), because Arg-164 is located far from the RagC/RRAGC or RagD/RRAGD nucleotide pocket. Disassembly of the LFC complex upon amino acid restimulation liberates the GTPase-activating activity. In terms of biological role, multi-functional protein, involved in both the cellular response to amino acid availability and in the regulation of glycolysis. GTPase-activating protein that plays a key role in the cellular response to amino acid availability through regulation of the non-canonical mTORC1 signaling cascade controlling the MiT/TFE factors TFEB and TFE3. Activates mTORC1 by acting as a GTPase-activating protein: specifically stimulates GTP hydrolysis by RagC/RRAGC or RagD/RRAGD, promoting the conversion to the GDP-bound state of RagC/RRAGC or RagD/RRAGD, and thereby activating the kinase activity of mTORC1. The GTPase-activating activity is inhibited during starvation and activated in presence of nutrients. Acts as a key component for non-canonical mTORC1-dependent control of the MiT/TFE factors TFEB and TFE3, while it is not involved in mTORC1-dependent phosphorylation of canonical RPS6KB1/S6K1 and EIF4EBP1/4E-BP1. In low-amino acid conditions, the lysosomal folliculin complex (LFC) is formed on the membrane of lysosomes, which inhibits the GTPase-activating activity of FLCN, inactivates mTORC1 and maximizes nuclear translocation of TFEB and TFE3. Upon amino acid restimulation, RagA/RRAGA (or RagB/RRAGB) nucleotide exchange promotes disassembly of the LFC complex and liberates the GTPase-activating activity of FLCN, leading to activation of mTORC1 and subsequent cytoplasmic retention of TFEB and TFE3. Indirectly acts as a positive regulator of Wnt signaling by promoting mTOR-dependent cytoplasmic retention of MiT/TFE factor TFE3. Required for the exit of hematopoietic stem cell from pluripotency by promoting mTOR-dependent cytoplasmic retention of TFE3, thereby increasing Wnt signaling. Involved in the control of embryonic stem cells differentiation; together with LAMTOR1 it is necessary to recruit and activate RagC/RRAGC and RagD/RRAGD at the lysosomes, and to induce exit of embryonic stem cells from pluripotency via non-canonical, mTOR-independent TFE3 inactivation. Acts as an inhibitor of browning of adipose tissue by regulating mTOR-dependent cytoplasmic retention of TFE3. In response to flow stress, regulates STK11/LKB1 accumulation and mTORC1 activation through primary cilia: may act by recruiting STK11/LKB1 to primary cilia for activation of AMPK resided at basal bodies, causing mTORC1 down-regulation. Together with FNIP1 and/or FNIP2, regulates autophagy: following phosphorylation by ULK1, interacts with GABARAP and promotes autophagy. Required for starvation-induced perinuclear clustering of lysosomes by promoting association of RILP with its effector RAB34. Regulates glycolysis by binding to lactate dehydrogenase LDHA, acting as an uncompetitive inhibitor. The chain is Folliculin from Mus musculus (Mouse).